A 173-amino-acid polypeptide reads, in one-letter code: Lens fiber membrane intrinsic protein (173 aa).

The Cytoplasmic portion of the chain corresponds to 1-3 (MYS). The helical transmembrane segment at 4 to 24 (FMGGGLFCAWVGTILLVVATA) threads the bilayer. The Extracellular portion of the chain corresponds to 25–66 (TDHWMQYRLSGSFAHQGLWRYCLGNKCFLQTESIAYWNATRA). C-linked (Man) tryptophan glycans are attached at residues tryptophan 43 and tryptophan 61. Asparagine 62 carries an N-linked (GlcNAc...) asparagine glycan. A helical membrane pass occupies residues 67 to 87 (FMILSALCATSGIIMGVLAFA). The Cytoplasmic portion of the chain corresponds to 88 to 98 (QQSTFTRLSRP). Residues 99 to 119 (FSAGIMFFASTLFVLLALAIY) traverse the membrane as a helical segment. Topologically, residues 120–140 (TGVTVSFLGRRFGDWRFSWSY) are extracellular. The helical transmembrane segment at 141–161 (ILGWVALLMTFFAGIFYMCAY) threads the bilayer. Residues 162 to 173 (RMHECRRLSTPR) lie on the Cytoplasmic side of the membrane. The residue at position 170 (serine 170) is a Phosphoserine. Threonine 171 carries the phosphothreonine modification.

It belongs to the PMP-22/EMP/MP20 family. In terms of assembly, seems to be associated with itself or another lens membrane component via disulfide bonds. As to expression, eye lens specific.

The protein localises to the membrane. In terms of biological role, present in the thicker 16-17 nm junctions of mammalian lens fiber cells, where it may contribute to cell junctional organization. Acts as a receptor for calmodulin. May play an important role in both lens development and cataractogenesis. The polypeptide is Lens fiber membrane intrinsic protein (Lim2) (Rattus norvegicus (Rat)).